We begin with the raw amino-acid sequence, 431 residues long: Polygalacturonase ADPG1 (431 aa).

An N-terminal signal peptide occupies residues 1 to 23; that stretch reads MARCCRHLAVFLCVLLMLSLCKA. 2 PbH1 repeats span residues 223 to 249 and 250 to 271; these read CNKV…HITN and TQNI…SIED. Asp264 (proton donor) is an active-site residue. His287 is an active-site residue. PbH1 repeat units follow at residues 303–324, 332–353, and 398–420; these read VSGI…RIKT, AKNI…IIDQ, and CQGI…NANV.

The protein belongs to the glycosyl hydrolase 28 family. As to expression, expressed in flower buds and siliques, in the dehiscence zone of anthers (stomium cells) and maturing siliques. Expressed in stigma during pollen tube growth. Not expressed in seeds or in the floral part or leaf abscission zone but found at the junction between the seed and the funiculus at the site of seed abscission.

It is found in the secreted. The protein resides in the cell wall. Its subcellular location is the cytoplasm. The catalysed reaction is (1,4-alpha-D-galacturonosyl)n+m + H2O = (1,4-alpha-D-galacturonosyl)n + (1,4-alpha-D-galacturonosyl)m.. Its function is as follows. Polygalacturonase involved in cell separation in the final stages of pod shatter and in anther dehiscence. Not involved in floral organ abscission. The polypeptide is Polygalacturonase ADPG1 (ADPG1) (Arabidopsis thaliana (Mouse-ear cress)).